An 873-amino-acid chain; its full sequence is Bifunctional levopimaradiene synthase, chloroplastic (873 aa).

A chloroplast-targeting transit peptide spans 1–59 (MAGVLFANLPCSLQLSPKVPFRQSTNILIPFHKRSSFGFNAQHCVRSHLRLRWNCVGIH). Substrate is bound at residue K271. Positions 405 and 407 each coordinate Mg(2+). A DXDD motif motif is present at residues 405–408 (DVDD). K492 is a substrate binding site. Mg(2+) contacts are provided by D624, D628, N769, T773, and E777. Residues 624–628 (DDLYD) carry the DDXXD motif motif.

It belongs to the terpene synthase family. Tpsd subfamily. Mg(2+) serves as cofactor. In terms of tissue distribution, expressed in roots.

The protein resides in the plastid. It is found in the chloroplast. The enzyme catalyses (2E,6E,10E)-geranylgeranyl diphosphate = (+)-copalyl diphosphate. It catalyses the reaction (+)-copalyl diphosphate = abieta-8(14),12-diene + diphosphate. It participates in terpene metabolism; ginkgolide biosynthesis. In terms of biological role, catalyzes the initial cyclization step in the biosynthesis of ginkgolides, a structurally unique family of diterpenoids that are highly specific platelet-activating-factor receptor antagonists. Bifunctional enzyme that catalyzes two sequential cyclizations of geranylgeranyl diphosphate (GGPP) to levopimaradiene. The chain is Bifunctional levopimaradiene synthase, chloroplastic (LPS) from Ginkgo biloba (Ginkgo).